The primary structure comprises 324 residues: Beta-ketoacyl-[acyl-carrier-protein] synthase III (324 aa).

Active-site residues include cysteine 112 and histidine 250. Residues 251–255 (QANIR) form an ACP-binding region. Asparagine 280 is an active-site residue.

This sequence belongs to the thiolase-like superfamily. FabH family. Homodimer.

Its subcellular location is the cytoplasm. The catalysed reaction is malonyl-[ACP] + acetyl-CoA + H(+) = 3-oxobutanoyl-[ACP] + CO2 + CoA. Its pathway is lipid metabolism; fatty acid biosynthesis. Its function is as follows. Catalyzes the condensation reaction of fatty acid synthesis by the addition to an acyl acceptor of two carbons from malonyl-ACP. Catalyzes the first condensation reaction which initiates fatty acid synthesis and may therefore play a role in governing the total rate of fatty acid production. Possesses both acetoacetyl-ACP synthase and acetyl transacylase activities. Its substrate specificity determines the biosynthesis of branched-chain and/or straight-chain of fatty acids. The protein is Beta-ketoacyl-[acyl-carrier-protein] synthase III of Clostridium novyi (strain NT).